A 383-amino-acid chain; its full sequence is Putative protein FAM157A (383 aa).

Disordered stretches follow at residues 1 to 21 and 177 to 254; these read MGPLFTTIPGAHSGPMRPLPK and ATAR…PLGR.

This sequence belongs to the FAM157 family.

The chain is Putative protein FAM157A (FAM157A) from Homo sapiens (Human).